Here is a 288-residue protein sequence, read N- to C-terminus: Acetyl-coenzyme A carboxylase carboxyl transferase subunit beta (288 aa).

One can recognise a CoA carboxyltransferase N-terminal domain in the interval 34 to 288 (LWVKCSRCNE…ANILSLHGTN (255 aa)). C38, C41, C57, and C60 together coordinate Zn(2+). The C4-type zinc finger occupies 38 to 60 (CSRCNEILYTKELDKNFKVCHKC).

Belongs to the AccD/PCCB family. As to quaternary structure, acetyl-CoA carboxylase is a heterohexamer composed of biotin carboxyl carrier protein (AccB), biotin carboxylase (AccC) and two subunits each of ACCase subunit alpha (AccA) and ACCase subunit beta (AccD). Zn(2+) serves as cofactor.

It localises to the cytoplasm. The enzyme catalyses N(6)-carboxybiotinyl-L-lysyl-[protein] + acetyl-CoA = N(6)-biotinyl-L-lysyl-[protein] + malonyl-CoA. The protein operates within lipid metabolism; malonyl-CoA biosynthesis; malonyl-CoA from acetyl-CoA: step 1/1. In terms of biological role, component of the acetyl coenzyme A carboxylase (ACC) complex. Biotin carboxylase (BC) catalyzes the carboxylation of biotin on its carrier protein (BCCP) and then the CO(2) group is transferred by the transcarboxylase to acetyl-CoA to form malonyl-CoA. In Desulforamulus reducens (strain ATCC BAA-1160 / DSM 100696 / MI-1) (Desulfotomaculum reducens), this protein is Acetyl-coenzyme A carboxylase carboxyl transferase subunit beta.